Consider the following 365-residue polypeptide: Holliday junction branch migration complex subunit RuvB (365 aa).

A large ATPase domain (RuvB-L) region spans residues 1 to 191; sequence MNFDPIDDFD…FGFTAHMDFY (191 aa). Residues L30, R31, G72, K75, T76, S77, 138-140, R181, Y191, and R228 each bind ATP; that span reads EDF. T76 serves as a coordination point for Mg(2+). The segment at 192 to 262 is small ATPAse domain (RuvB-S); it reads EPEELQQILM…VAQAALAVYD (71 aa). The segment at 265–365 is head domain (RuvB-H); that stretch reads QLGLDRLDRS…QATLFDPNGE (101 aa). R320 and R325 together coordinate DNA.

Belongs to the RuvB family. Homohexamer. Forms an RuvA(8)-RuvB(12)-Holliday junction (HJ) complex. HJ DNA is sandwiched between 2 RuvA tetramers; dsDNA enters through RuvA and exits via RuvB. An RuvB hexamer assembles on each DNA strand where it exits the tetramer. Each RuvB hexamer is contacted by two RuvA subunits (via domain III) on 2 adjacent RuvB subunits; this complex drives branch migration. In the full resolvosome a probable DNA-RuvA(4)-RuvB(12)-RuvC(2) complex forms which resolves the HJ.

It localises to the cytoplasm. It catalyses the reaction ATP + H2O = ADP + phosphate + H(+). In terms of biological role, the RuvA-RuvB-RuvC complex processes Holliday junction (HJ) DNA during genetic recombination and DNA repair, while the RuvA-RuvB complex plays an important role in the rescue of blocked DNA replication forks via replication fork reversal (RFR). RuvA specifically binds to HJ cruciform DNA, conferring on it an open structure. The RuvB hexamer acts as an ATP-dependent pump, pulling dsDNA into and through the RuvAB complex. RuvB forms 2 homohexamers on either side of HJ DNA bound by 1 or 2 RuvA tetramers; 4 subunits per hexamer contact DNA at a time. Coordinated motions by a converter formed by DNA-disengaged RuvB subunits stimulates ATP hydrolysis and nucleotide exchange. Immobilization of the converter enables RuvB to convert the ATP-contained energy into a lever motion, pulling 2 nucleotides of DNA out of the RuvA tetramer per ATP hydrolyzed, thus driving DNA branch migration. The RuvB motors rotate together with the DNA substrate, which together with the progressing nucleotide cycle form the mechanistic basis for DNA recombination by continuous HJ branch migration. Branch migration allows RuvC to scan DNA until it finds its consensus sequence, where it cleaves and resolves cruciform DNA. This is Holliday junction branch migration complex subunit RuvB from Rhodococcus erythropolis (strain PR4 / NBRC 100887).